Consider the following 318-residue polypeptide: Large ribosomal subunit protein uL10 (318 aa).

At Y24 the chain carries Phosphotyrosine. A Phosphothreonine modification is found at T59. K264 is covalently cross-linked (Glycyl lysine isopeptide (Lys-Gly) (interchain with G-Cter in ubiquitin)). Residue K298 forms a Glycyl lysine isopeptide (Lys-Gly) (interchain with G-Cter in SUMO1); alternate linkage. K298 participates in a covalent cross-link: Glycyl lysine isopeptide (Lys-Gly) (interchain with G-Cter in SUMO2); alternate. The disordered stretch occupies residues 298–318; it reads KVEAKEESEESDEDMGFGLFD. Acidic residues predominate over residues 303–312; the sequence is EESEESDEDM. Residues S305 and S308 each carry the phosphoserine modification.

It belongs to the universal ribosomal protein uL10 family. As to quaternary structure, P0 forms a pentameric complex by interaction with dimers of P1 and P2. Identified in a IGF2BP1-dependent mRNP granule complex containing untranslated mRNAs. Interacts with APEX1. Interacts with FMR1. Ubiquitinated at Lys-264 by RNF14 and RNF25 in response to ribosome collisions (ribosome stalling).

It localises to the nucleus. The protein resides in the cytoplasm. Functionally, ribosomal protein P0 is the functional equivalent of E.coli protein L10. The sequence is that of Large ribosomal subunit protein uL10 (RPLP0) from Sus scrofa (Pig).